The following is a 267-amino-acid chain: Ribosomal RNA small subunit methyltransferase A (267 aa).

S-adenosyl-L-methionine is bound by residues Asn18, Leu20, Gly45, Glu66, Asp91, and Asn112.

The protein belongs to the class I-like SAM-binding methyltransferase superfamily. rRNA adenine N(6)-methyltransferase family. RsmA subfamily.

Its subcellular location is the cytoplasm. It catalyses the reaction adenosine(1518)/adenosine(1519) in 16S rRNA + 4 S-adenosyl-L-methionine = N(6)-dimethyladenosine(1518)/N(6)-dimethyladenosine(1519) in 16S rRNA + 4 S-adenosyl-L-homocysteine + 4 H(+). Specifically dimethylates two adjacent adenosines (A1518 and A1519) in the loop of a conserved hairpin near the 3'-end of 16S rRNA in the 30S particle. May play a critical role in biogenesis of 30S subunits. The polypeptide is Ribosomal RNA small subunit methyltransferase A (Shewanella sediminis (strain HAW-EB3)).